Here is a 443-residue protein sequence, read N- to C-terminus: Threonine/serine transporter TdcC (443 aa).

A run of 11 helical transmembrane segments spans residues Thr22–Ile42, Ala44–Phe64, Gly97–Val117, Phe140–Met160, Val163–Ile183, Ile207–Ile227, Ala259–Ser279, Ala319–Leu339, Ile366–Leu386, Ile389–Ile409, and Glu423–Phe443.

The protein belongs to the amino acid/polyamine transporter 2 family. SdaC/TdcC subfamily.

It is found in the cell inner membrane. It catalyses the reaction L-threonine(in) + H(+)(in) = L-threonine(out) + H(+)(out). It carries out the reaction L-serine(in) + H(+)(in) = L-serine(out) + H(+)(out). Its function is as follows. Involved in the import of threonine and serine into the cell, with the concomitant import of a proton (symport system). The sequence is that of Threonine/serine transporter TdcC from Enterobacter sp. (strain 638).